Here is a 652-residue protein sequence, read N- to C-terminus: Chaperone protein HtpG (652 aa).

Residues 1–348 form an a; substrate-binding region; sequence MATDAHKETL…SDDLPLNVSR (348 aa). The segment at 349-565 is b; sequence ELLQHNPLLD…EYDFGMGMQR (217 aa). Positions 566–652 are c; the sequence is LLKAAGHAMP…EAKSNAARGD (87 aa).

Belongs to the heat shock protein 90 family. Homodimer.

The protein localises to the cytoplasm. Functionally, molecular chaperone. Has ATPase activity. This chain is Chaperone protein HtpG, found in Alkalilimnicola ehrlichii (strain ATCC BAA-1101 / DSM 17681 / MLHE-1).